The chain runs to 526 residues: Glucose-6-phosphate isomerase (526 aa).

Glu343 (proton donor) is an active-site residue. Residues His374 and Lys494 contribute to the active site.

This sequence belongs to the GPI family.

It is found in the cytoplasm. The enzyme catalyses alpha-D-glucose 6-phosphate = beta-D-fructose 6-phosphate. Its pathway is carbohydrate biosynthesis; gluconeogenesis. The protein operates within carbohydrate degradation; glycolysis; D-glyceraldehyde 3-phosphate and glycerone phosphate from D-glucose: step 2/4. Its function is as follows. Catalyzes the reversible isomerization of glucose-6-phosphate to fructose-6-phosphate. The sequence is that of Glucose-6-phosphate isomerase from Dechloromonas aromatica (strain RCB).